Here is a 225-residue protein sequence, read N- to C-terminus: Small ribosomal subunit protein mS26 (225 aa).

This sequence belongs to the mitochondrion-specific ribosomal protein mS26 family. Component of the mitochondrial ribosome small subunit (28S) which comprises a 12S rRNA and about 30 distinct proteins.

Its subcellular location is the mitochondrion. This Drosophila melanogaster (Fruit fly) protein is Small ribosomal subunit protein mS26 (mRpS26).